The sequence spans 509 residues: MGLRLLACLFHLPTAVIYGSLSLFVSILHNVFLLYYVDTFVSVYKIDKLSFWIGETVFLIWNSLNDPLFGWLSDRVFLSTQQPGAEISSPEVVLKRLRALSHNGPLFAISFLAFWVAWAHPGLQFLLCLCMYDSFLTMVDLHHNALLADLAVSAKDRTSLNFYCSFFSAIGSLSVFMSYAVWNKEDFFSFRIFCIVLAFCSIVGFTLSTQLLRQRFETDGKAKWDQESTLKELYIEKLSVPQEKRITLVEYLQQLSRHRNFLWFVCMNLIQVFHCHFNSNFFPLFLEHLLSDKISVSTGSFLLGISYIAPHLNNLYFLSLCRRWGVYAVVRGLFFLKLALSVVMLLAGPDQVYLLCIFIASNRVFTEGTCKLLNLVVTDLVDEDLVLNRRKQAASALLFGMVALVTKPGQTFAPLIGTWLLCVYTGYDIFQRNPLSNVVSAQPKLESDTILEPTLRQGCFYLLVFVPITCALLQLLSWTQFSLHGKRLQMVKAQRQGLMQGRAPEIKMI.

The Extracellular portion of the chain corresponds to 1-10 (MGLRLLACLF). A helical transmembrane segment spans residues 11 to 42 (HLPTAVIYGSLSLFVSILHNVFLLYYVDTFVS). The Cytoplasmic portion of the chain corresponds to 43 to 54 (VYKIDKLSFWIG). Residues 55 to 73 (ETVFLIWNSLNDPLFGWLS) traverse the membrane as a helical segment. Residues 74–98 (DRVFLSTQQPGAEISSPEVVLKRLR) are Extracellular-facing. Residues 99-116 (ALSHNGPLFAISFLAFWV) form a helical membrane-spanning segment. The Cytoplasmic segment spans residues 117 to 124 (AWAHPGLQ). Residues 125–149 (FLLCLCMYDSFLTMVDLHHNALLAD) form a helical membrane-spanning segment. The Extracellular portion of the chain corresponds to 150–153 (LAVS). The helical transmembrane segment at 154–177 (AKDRTSLNFYCSFFSAIGSLSVFM) threads the bilayer. At 178 to 189 (SYAVWNKEDFFS) the chain is on the cytoplasmic side. A helical transmembrane segment spans residues 190-221 (FRIFCIVLAFCSIVGFTLSTQLLRQRFETDGK). The Extracellular portion of the chain corresponds to 222-259 (AKWDQESTLKELYIEKLSVPQEKRITLVEYLQQLSRHR). A helical membrane pass occupies residues 260–287 (NFLWFVCMNLIQVFHCHFNSNFFPLFLE). The Cytoplasmic segment spans residues 288–300 (HLLSDKISVSTGS). The chain crosses the membrane as a helical span at residues 301 to 320 (FLLGISYIAPHLNNLYFLSL). The Extracellular portion of the chain corresponds to 321 to 325 (CRRWG). The helical transmembrane segment at 326–345 (VYAVVRGLFFLKLALSVVML) threads the bilayer. At 346-353 (LAGPDQVY) the chain is on the cytoplasmic side. The chain crosses the membrane as a helical span at residues 354–388 (LLCIFIASNRVFTEGTCKLLNLVVTDLVDEDLVLN). At 389–397 (RRKQAASAL) the chain is on the extracellular side. A helical transmembrane segment spans residues 398–424 (LFGMVALVTKPGQTFAPLIGTWLLCVY). Topologically, residues 425 to 458 (TGYDIFQRNPLSNVVSAQPKLESDTILEPTLRQG) are cytoplasmic. A helical membrane pass occupies residues 459–477 (CFYLLVFVPITCALLQLLS). The Extracellular portion of the chain corresponds to 478 to 509 (WTQFSLHGKRLQMVKAQRQGLMQGRAPEIKMI).

The protein resides in the cell membrane. This Gallus gallus (Chicken) protein is Transmembrane protein 180.